The sequence spans 839 residues: Oligopeptide transporter phomP2 (839 aa).

The interval 1 to 58 (MEADPKVPFTDEMNIQDEHNWESGSWSSSRRSNDSNVTLLSRRSSVEQHEDERQKDSD) is disordered. Positions 23–36 (SGSWSSSRRSNDSN) are enriched in low complexity. Residues asparagine 33 and asparagine 36 are each glycosylated (N-linked (GlcNAc...) asparagine). The segment covering 44–58 (SSVEQHEDERQKDSD) has biased composition (basic and acidic residues). 6 helical membrane-spanning segments follow: residues 105–125 (VWLL…VYYF), 177–197 (ALVV…GPLS), 210–230 (PWAI…VGLY), 268–288 (VFMA…FVFP), 315–335 (GFGL…SPLF), and 345–365 (FVGA…SDAL). 2 N-linked (GlcNAc...) asparagine glycosylation sites follow: asparagine 386 and asparagine 398. A run of 4 helical transmembrane segments spans residues 415–435 (AMHF…AVLF), 478–498 (AWYA…LYAG), 505–525 (WGLQ…GMLF), and 585–605 (WELL…NWAV). Gly residues predominate over residues 629–646 (QGLGLGQGGGGGGGGGGQ). The disordered stretch occupies residues 629-654 (QGLGLGQGGGGGGGGGGQQQRAAGAH). The next 3 helical transmembrane spans lie at 665–685 (NFFS…FGGG), 697–717 (WLLP…WLIH), and 728–748 (WPLH…FPTT). N-linked (GlcNAc...) asparagine glycosylation occurs at asparagine 749. The chain crosses the membrane as a helical span at residues 781–801 (AGLDCGAQLVQMVLGVAFLVF).

It belongs to the oligopeptide OPT transporter family.

The protein resides in the membrane. Oligopeptide transporter; part of the gene cluster that mediates the biosynthesis of the phomopsins, a group of hexapeptide mycotoxins which infects lupins and causes lupinosis disease in livestock. This chain is Oligopeptide transporter phomP2, found in Diaporthe leptostromiformis (Lupinosis disease fungus).